Consider the following 249-residue polypeptide: 3alpha-hydroxy bile acid-CoA-ester 3-dehydrogenase 2 (249 aa).

Residues 15-18 (TRGI), glutamate 38, glutamate 42, and asparagine 92 contribute to the NAD(+) site. Serine 144 lines the substrate pocket. Active-site proton donor/acceptor residues include tyrosine 157 and lysine 161. NAD(+) is bound by residues lysine 161 and 190–192 (VNT).

The protein belongs to the short-chain dehydrogenases/reductases (SDR) family. Homotetramer.

The catalysed reaction is a 3alpha-hydroxy bile acid CoA + NAD(+) = a 3-oxo bile acid CoA + NADH + H(+). The enzyme catalyses choloyl-CoA + NAD(+) = 7alpha,12alpha-dihydroxy-3-oxochol-24-oyl-CoA + NADH + H(+). It catalyses the reaction chenodeoxycholoyl-CoA + NAD(+) = 7alpha-hydroxy-3-oxochol-24-oyl-CoA + NADH + H(+). It carries out the reaction deoxycholoyl-CoA + NAD(+) = 12alpha-hydroxy-3-oxocholan-24-oyl-CoA + NADH + H(+). The catalysed reaction is lithocholoyl-CoA + NAD(+) = 3-oxocholan-24-oyl-CoA + NADH + H(+). The protein operates within lipid metabolism; bile acid biosynthesis. Functionally, involved in the multi-step bile acid 7alpha-dehydroxylation pathway that transforms primary bile acids to secondary bile acids in the human gut. Catalyzes the oxidation of C3-hydroxyl group of CoA conjugated bile acids generating a C3-oxo bile acid intermediate. Can use choloyl-CoA, chenodeoxycholoyl-CoA, deoxycholoyl-CoA, and lithocholoyl-CoA as substrates with similar efficiency. Highly prefers NAD over NADP as cosubstrate. Also catalyzes the reverse reactions; in vitro, the preferred direction of reaction depends on the pH. Has very little activity with unconjugated (non-CoA) bile acid substrates. The chain is 3alpha-hydroxy bile acid-CoA-ester 3-dehydrogenase 2 (baiA2) from Clostridium scindens (strain JCM 10418 / VPI 12708).